Consider the following 426-residue polypeptide: Glutamate-1-semialdehyde 2,1-aminomutase (426 aa).

Lys-265 bears the N6-(pyridoxal phosphate)lysine mark.

It belongs to the class-III pyridoxal-phosphate-dependent aminotransferase family. HemL subfamily. As to quaternary structure, homodimer. The cofactor is pyridoxal 5'-phosphate.

The protein resides in the cytoplasm. It carries out the reaction (S)-4-amino-5-oxopentanoate = 5-aminolevulinate. Its pathway is porphyrin-containing compound metabolism; protoporphyrin-IX biosynthesis; 5-aminolevulinate from L-glutamyl-tRNA(Glu): step 2/2. This is Glutamate-1-semialdehyde 2,1-aminomutase from Yersinia enterocolitica serotype O:8 / biotype 1B (strain NCTC 13174 / 8081).